The chain runs to 332 residues: Nucleoid-associated protein VVA0877 (332 aa).

The protein belongs to the YejK family.

It is found in the cytoplasm. Its subcellular location is the nucleoid. This is Nucleoid-associated protein VVA0877 from Vibrio vulnificus (strain YJ016).